The chain runs to 412 residues: Cinnamoyl-CoA:phenyllactate CoA-transferase (412 aa).

Asn-102 provides a ligand contact to CoA. The Nucleophile role is filled by Asp-176.

In terms of assembly, homodimer. Part of the heterotrimeric phenyllactate dehydratase complex FldABC, composed of (R)-phenyllactate CoA-transferase (FldA) and a heterodimeric (R)-phenyllactyl-CoA dehydratase (FldB and FldC).

It carries out the reaction (E)-cinnamoyl-CoA + (R)-3-phenyllactate = (R)-3-phenyllactoyl-CoA + (E)-cinnamate. The protein operates within amino-acid degradation; L-phenylalanine degradation. Functionally, component of the phenyllactate dehydratase complex FldABC that is involved in the fermentation of L-phenylalanine via a Stickland reaction. This complex catalyzes the reversible syn-dehydration of (R)-phenyllactate to (E)-cinnamate in two steps, a CoA-transfer from cinnamoyl-CoA to phenyllactate, catalyzed by FldA, followed by the dehydration of phenyllactyl-CoA to cinnamoyl-CoA, catalyzed by FldB and FldC. In vitro, FldA can use 3-phenylpropanoate as a better CoA-acceptor than phenyllactate. In Clostridium sporogenes, this protein is Cinnamoyl-CoA:phenyllactate CoA-transferase.